The following is a 305-amino-acid chain: Uridylate cyclase (305 aa).

Asp58 and Asp102 together coordinate Mn(2+).

It belongs to the adenylyl cyclase class-4/guanylyl cyclase family. Pyrimidine cyclase subfamily. In terms of assembly, homodimer. It depends on Mn(2+) as a cofactor.

The protein resides in the cytoplasm. The enzyme catalyses GTP = 3',5'-cyclic GMP + diphosphate. It carries out the reaction UTP = 3',5'-cyclic UMP + diphosphate. Its function is as follows. Pycsar (pyrimidine cyclase system for antiphage resistance) provides immunity against bacteriophage. The pyrimidine cyclase (PycC) synthesizes cyclic nucleotides in response to infection; these serve as specific second messenger signals. The signals activate the adjacent effector, leading to bacterial cell death and abortive phage infection. A clade D Pycsar system. In terms of biological role, the pyrimidine cyclase gene of a two-gene Pycsar system, generates cyclic UMP (cUMP) from UTP as well as cGMP from GTP to a lesser extent, has little to no activity on ATP or CTP. Expression of this and adjacent effector MePycTM (AC A0A1C5G2D0) probably confers resistance to bacteriophage. The genes are probably only expressed in response to bacteriophage infection. This chain is Uridylate cyclase, found in Micromonospora echinofusca.